The primary structure comprises 492 residues: uncharacterized protein (492 aa).

The next 12 helical transmembrane spans lie at 16–36 (FIAFVFNYIAGFGFISVVMTM), 39–59 (VGPFSYLVLGLTSFAILGVVL), 107–127 (SFNGVVIPAVLIFSFADIPVV), 133–153 (IIIGLLVGGFLLFGLLTFISL), 162–182 (AIFYFAVIKWIVVIGGFILGI), 210–230 (IIFISLALTIAFAGTEDLASI), 243–263 (FLIAFGCVVLLYLVGFVIISG), 291–311 (LVGGVPLLVIYGLGLLVNSLA), 350–370 (VLISNLMTLLVMLIMVIIPFL), 394–414 (MAAAISLIQYFITFIFFFMIF), 429–449 (VSYVISFALVSVLLFVPLFPF), and 454–474 (VFNTFKIVVLICFYLLGVGFF).

This sequence to M.genitalium MG225.

The protein resides in the cell membrane. This is an uncharacterized protein from Mycoplasma genitalium (strain ATCC 33530 / DSM 19775 / NCTC 10195 / G37) (Mycoplasmoides genitalium).